The following is a 452-amino-acid chain: 3-phosphoshikimate 1-carboxyvinyltransferase (452 aa).

Residues Met1–Arg23 are disordered. Positions 28, 29, and 33 each coordinate 3-phosphoshikimate. Lys28 is a phosphoenolpyruvate binding site. Phosphoenolpyruvate is bound by residues Gly100 and Arg128. 3-phosphoshikimate contacts are provided by Ser173, Gln175, Asp326, and Lys353. Gln175 is a phosphoenolpyruvate binding site. Asp326 acts as the Proton acceptor in catalysis. Phosphoenolpyruvate is bound by residues Arg357 and Arg405.

This sequence belongs to the EPSP synthase family. In terms of assembly, monomer.

Its subcellular location is the cytoplasm. The enzyme catalyses 3-phosphoshikimate + phosphoenolpyruvate = 5-O-(1-carboxyvinyl)-3-phosphoshikimate + phosphate. Its pathway is metabolic intermediate biosynthesis; chorismate biosynthesis; chorismate from D-erythrose 4-phosphate and phosphoenolpyruvate: step 6/7. Functionally, catalyzes the transfer of the enolpyruvyl moiety of phosphoenolpyruvate (PEP) to the 5-hydroxyl of shikimate-3-phosphate (S3P) to produce enolpyruvyl shikimate-3-phosphate and inorganic phosphate. The protein is 3-phosphoshikimate 1-carboxyvinyltransferase of Rhizobium johnstonii (strain DSM 114642 / LMG 32736 / 3841) (Rhizobium leguminosarum bv. viciae).